The sequence spans 380 residues: Tryptophan 2,3-dioxygenase (380 aa).

Substrate contacts are provided by residues 57–61 (FIITH) and Arg-128. Heme is bound at residue His-313. A substrate-binding site is contributed by Thr-328.

It belongs to the tryptophan 2,3-dioxygenase family. Homotetramer. Dimer of dimers. It depends on heme as a cofactor.

It catalyses the reaction L-tryptophan + O2 = N-formyl-L-kynurenine. The protein operates within amino-acid degradation; L-tryptophan degradation via kynurenine pathway; L-kynurenine from L-tryptophan: step 1/2. It participates in pigment biosynthesis; ommochrome biosynthesis. Functionally, heme-dependent dioxygenase that catalyzes the oxidative cleavage of the L-tryptophan (L-Trp) pyrrole ring and converts L-tryptophan to N-formyl-L-kynurenine. Catalyzes the oxidative cleavage of the indole moiety. The polypeptide is Tryptophan 2,3-dioxygenase (Drosophila mojavensis (Fruit fly)).